The primary structure comprises 24 residues: Brevinin-1PTa (24 aa).

The cysteines at positions 18 and 24 are disulfide-linked.

As to expression, expressed by the skin glands.

Its subcellular location is the secreted. Its function is as follows. Has antibacterial activity against the Gram-positive bacterium S.aureus ATCC 25923 (MIC=3 uM) and the Gram-negative bacterium E.coli ATCC 25726 (MIC=24 uM). The chain is Brevinin-1PTa from Pulchrana picturata (Malaysian fire frog).